The chain runs to 157 residues: Phosphopantetheine adenylyltransferase (157 aa).

Ser8 lines the substrate pocket. ATP contacts are provided by residues 8-9 (SF) and His16. Residues Lys40, Thr72, and Arg86 each coordinate substrate. Residues 87-89 (GLR), Glu97, and 122-128 (HSFLSSS) contribute to the ATP site.

This sequence belongs to the bacterial CoaD family. Homohexamer. The cofactor is Mg(2+).

It is found in the cytoplasm. It carries out the reaction (R)-4'-phosphopantetheine + ATP + H(+) = 3'-dephospho-CoA + diphosphate. Its pathway is cofactor biosynthesis; coenzyme A biosynthesis; CoA from (R)-pantothenate: step 4/5. Functionally, reversibly transfers an adenylyl group from ATP to 4'-phosphopantetheine, yielding dephospho-CoA (dPCoA) and pyrophosphate. The chain is Phosphopantetheine adenylyltransferase from Prochlorococcus marinus (strain MIT 9303).